Here is a 372-residue protein sequence, read N- to C-terminus: Flagellar P-ring protein (372 aa).

Positions 1-26 (MNLSSLSFRLLATLLGACVVVAPASA) are cleaved as a signal peptide.

The protein belongs to the FlgI family. As to quaternary structure, the basal body constitutes a major portion of the flagellar organelle and consists of four rings (L,P,S, and M) mounted on a central rod.

Its subcellular location is the periplasm. It is found in the bacterial flagellum basal body. Functionally, assembles around the rod to form the L-ring and probably protects the motor/basal body from shearing forces during rotation. The protein is Flagellar P-ring protein of Xanthomonas oryzae pv. oryzae (strain MAFF 311018).